Here is a 316-residue protein sequence, read N- to C-terminus: Epoxide hydrolase 3 (316 aa).

The AB hydrolase-1 domain maps to 25 to 302 (PVVLLLHGFP…ACHFINQERP (278 aa)). The Nucleophile role is filled by D101. Y150 contributes to the an epoxide binding site. Catalysis depends on Y230, which acts as the Proton donor. Catalysis depends on H295, which acts as the Proton acceptor.

The protein belongs to the AB hydrolase superfamily. Epoxide hydrolase family. As to quaternary structure, homodimer. In terms of tissue distribution, highly expressed in young fruits 15 days after anthesis (15-DAA).

The catalysed reaction is an epoxide + H2O = an ethanediol. It catalyses the reaction (24S)-24,25-epoxycucurbitadienol + H2O = (24R)-24,25-dihydroxycucurbitadienol. It functions in the pathway secondary metabolite biosynthesis; terpenoid biosynthesis. In terms of biological role, epoxide hydrolase involved in the biosynthesis of cucurbitacin and mogroside tetracyclic triterpene natural products (e.g. siamenoside I and mogrosides IV, V and VI). Cucurbitacins have cytotoxic properties and exhibit deterrent taste as a defense barrier against herbivores. Mogrosides are nonsugar highly oxygenated compounds used as high-intensity zero-calorie sweeteners; they also possess pharmacological properties such as regulating immunity, lowering blood sugar and lipid levels, protecting the liver, and acting as antioxidants and antitumor agents. Catalyzes the hydrolysis of aromatic epoxide-containing substrates, such as the conversion of 24,25-epoxycucurbitadienol to 24,25-dihydroxycucurbitadienol. The chain is Epoxide hydrolase 3 from Siraitia grosvenorii (Monk's fruit).